The chain runs to 580 residues: CDKN2A-interacting protein (580 aa).

At Ala2 the chain carries N-acetylalanine. Residues 19–133 form the XRN2-binding (XTBD) domain; it reads VEALRCDGET…KVKKRGISSS (115 aa). Positions 129-356 are disordered; it reads GISSSNEGVE…PKSSSSTNTS (228 aa). Phosphoserine is present on Ser131. Over residues 155–167 the composition is skewed to basic and acidic residues; the sequence is EQDHAKTSAKTER. Over residues 168 to 179 the composition is skewed to polar residues; that stretch reads ASAQQENSSTCI. Lys184 participates in a covalent cross-link: Glycyl lysine isopeptide (Lys-Gly) (interchain with G-Cter in SUMO1). Low complexity predominate over residues 185–228; it reads SESGNSARSSGISSQNSSTSDGDRSVSSQSSSSVSSQVTTAGSG. A compositionally biased stretch (basic and acidic residues) spans 231–240; sequence SEAEAPDKHG. The residue at position 241 (Ser241) is a Phosphoserine. A compositionally biased stretch (polar residues) spans 248–269; it reads LKSSVNSHMTQSTDSRQQSGSP. 2 stretches are compositionally biased toward low complexity: residues 274-313 and 321-356; these read LEGSSASASQSSSEIEVPLLGSSGSSEVELPLLSSKPSSE and SKTSSEASVSSSVAKNSSSSGTSLLTPKSSSSTNTS. Thr346 is subject to Phosphothreonine. Ser389 carries the post-translational modification Phosphoserine. Residues 462–537 enclose the DRBM domain; it reads NHGELLNAAI…SREALKLFLK (76 aa).

It belongs to the CARF family. As to quaternary structure, interacts with CDKN2A/p14ARF, p53/TP53 and MDM2. Interacts with CHEK2 and MAPK3. Interacts with XRN2. May be ubiquitinated. In terms of tissue distribution, ubiquitously expressed.

The protein localises to the nucleus. It is found in the nucleoplasm. Functionally, regulates DNA damage response in a dose-dependent manner through a number of signaling pathways involved in cell proliferation, apoptosis and senescence. This Homo sapiens (Human) protein is CDKN2A-interacting protein (CDKN2AIP).